We begin with the raw amino-acid sequence, 357 residues long: UDP-N-acetylglucosamine--N-acetylmuramyl-(pentapeptide) pyrophosphoryl-undecaprenol N-acetylglucosamine transferase (357 aa).

UDP-N-acetyl-alpha-D-glucosamine-binding positions include 13–15 (TGG), Asn-122, Arg-163, Ser-191, and Gln-288.

This sequence belongs to the glycosyltransferase 28 family. MurG subfamily.

Its subcellular location is the cell inner membrane. The catalysed reaction is di-trans,octa-cis-undecaprenyl diphospho-N-acetyl-alpha-D-muramoyl-L-alanyl-D-glutamyl-meso-2,6-diaminopimeloyl-D-alanyl-D-alanine + UDP-N-acetyl-alpha-D-glucosamine = di-trans,octa-cis-undecaprenyl diphospho-[N-acetyl-alpha-D-glucosaminyl-(1-&gt;4)]-N-acetyl-alpha-D-muramoyl-L-alanyl-D-glutamyl-meso-2,6-diaminopimeloyl-D-alanyl-D-alanine + UDP + H(+). It participates in cell wall biogenesis; peptidoglycan biosynthesis. Cell wall formation. Catalyzes the transfer of a GlcNAc subunit on undecaprenyl-pyrophosphoryl-MurNAc-pentapeptide (lipid intermediate I) to form undecaprenyl-pyrophosphoryl-MurNAc-(pentapeptide)GlcNAc (lipid intermediate II). This Gloeobacter violaceus (strain ATCC 29082 / PCC 7421) protein is UDP-N-acetylglucosamine--N-acetylmuramyl-(pentapeptide) pyrophosphoryl-undecaprenol N-acetylglucosamine transferase.